The following is a 393-amino-acid chain: Elongation factor Tu (393 aa).

One can recognise a tr-type G domain in the interval 6–204 (KPHINVGTIG…ALEKIELPMR (199 aa)). Positions 15–22 (GHVDHGKT) are G1. Residue 15–22 (GHVDHGKT) participates in GTP binding. T22 provides a ligand contact to Mg(2+). Positions 58–62 (GITIS) are G2. The G3 stretch occupies residues 79–82 (DCPG). GTP contacts are provided by residues 79–83 (DCPGH) and 134–137 (NKCD). The G4 stretch occupies residues 134 to 137 (NKCD). Positions 172–174 (SAV) are G5.

It belongs to the TRAFAC class translation factor GTPase superfamily. Classic translation factor GTPase family. EF-Tu/EF-1A subfamily. As to quaternary structure, monomer.

It is found in the cytoplasm. It catalyses the reaction GTP + H2O = GDP + phosphate + H(+). Functionally, GTP hydrolase that promotes the GTP-dependent binding of aminoacyl-tRNA to the A-site of ribosomes during protein biosynthesis. The polypeptide is Elongation factor Tu (Anaplasma phagocytophilum (strain HZ)).